The following is a 443-amino-acid chain: Tubulin beta chain (443 aa).

GTP contacts are provided by Gln-11, Glu-69, Ser-138, Gly-142, Thr-143, Gly-144, Asn-204, and Asn-226. Glu-69 is a Mg(2+) binding site. Residues 424-443 (QYQDATAEEEGEFEEEEGEN) form a disordered region. Acidic residues predominate over residues 429–443 (TAEEEGEFEEEEGEN).

The protein belongs to the tubulin family. In terms of assembly, dimer of alpha and beta chains. A typical microtubule is a hollow water-filled tube with an outer diameter of 25 nm and an inner diameter of 15 nM. Alpha-beta heterodimers associate head-to-tail to form protofilaments running lengthwise along the microtubule wall with the beta-tubulin subunit facing the microtubule plus end conferring a structural polarity. Microtubules usually have 13 protofilaments but different protofilament numbers can be found in some organisms and specialized cells. The cofactor is Mg(2+). Some glutamate residues at the C-terminus are either polyglutamylated or polyglycylated. These 2 modifications occur exclusively on glutamate residues and result in either polyglutamate or polyglycine chains on the gamma-carboxyl group. Both modifications can coexist on the same protein on adjacent residues, and lowering polyglycylation levels increases polyglutamylation, and reciprocally. The precise function of such modifications is still unclear but they regulate the assembly and dynamics of axonemal microtubules.

Its subcellular location is the cytoplasm. The protein localises to the cytoskeleton. In terms of biological role, tubulin is the major constituent of microtubules, a cylinder consisting of laterally associated linear protofilaments composed of alpha- and beta-tubulin heterodimers. Microtubules grow by the addition of GTP-tubulin dimers to the microtubule end, where a stabilizing cap forms. Below the cap, tubulin dimers are in GDP-bound state, owing to GTPase activity of alpha-tubulin. This chain is Tubulin beta chain (BTU1), found in Tetrahymena thermophila.